The primary structure comprises 469 residues: 24-hydroxycholesterol 7-alpha-hydroxylase (469 aa).

The N-terminal stretch at 1–23 is a signal peptide; sequence MELISPTVIIILGCLALFLLLQR. The next 3 helical transmembrane spans lie at 267–287, 352–372, and 412–432; these read GLLL…WTLA, VEIL…PFWL, and FQCP…ILIL. Cysteine 414 contributes to the heme binding site.

This sequence belongs to the cytochrome P450 family. Requires heme as cofactor. In terms of tissue distribution, liver specific.

The protein resides in the endoplasmic reticulum membrane. It localises to the microsome membrane. The catalysed reaction is (24S)-hydroxycholesterol + reduced [NADPH--hemoprotein reductase] + O2 = (24S)-7alpha-dihydroxycholesterol + oxidized [NADPH--hemoprotein reductase] + H2O + H(+). The protein operates within steroid metabolism; cholesterol degradation. It functions in the pathway lipid metabolism; bile acid biosynthesis. Functionally, a cytochrome P450 monooxygenase involved in neural cholesterol clearance through bile acid synthesis. Catalyzes 7-alpha hydroxylation of (24S)-hydroxycholesterol, a neural oxysterol that is metabolized to bile acids in the liver. Mechanistically, uses molecular oxygen inserting one oxygen atom into a substrate, and reducing the second into a water molecule, with two electrons provided by NADPH via cytochrome P450 reductase (CPR; NADPH-ferrihemoprotein reductase). This chain is 24-hydroxycholesterol 7-alpha-hydroxylase, found in Homo sapiens (Human).